The following is a 231-amino-acid chain: Equistatin (231 aa).

Residues 1–32 form the signal peptide; it reads MALSQNQAKFSKGFVVMIWVLFIACAITSTEA. Thyroglobulin type-1 domains are found at residues 34 to 95, 102 to 163, and 167 to 231; these read LTKC…SPDC, LTLC…RPTC, and LSEC…RPTC. Cystine bridges form between C37-C56, C67-C74, C76-C95, C105-C124, C135-C142, C144-C163, C170-C191, C202-C209, and C211-C231.

Belongs to the protease inhibitor I31 family.

It localises to the secreted. Its function is as follows. Potent inhibitor of papain-like cysteine proteinases (Ki=0.18-0.57 nM on papain), as well as of the aspartic proteinase cathepsin D (Ki=0.3-05 nM). The sequence is that of Equistatin from Actinia equina (Beadlet anemone).